The primary structure comprises 497 residues: RNA-splicing ligase RtcB homolog (497 aa).

Residues Asp111, Cys114, His219, His251, and His345 each contribute to the Mn(2+) site. 218-222 serves as a coordination point for GMP; it reads NHYAE. GMP-binding positions include 345-346, 394-397, Ser401, 420-423, and Lys496; these read HN, GGTM, and HGAG. The active-site GMP-histidine intermediate is the His420.

It belongs to the RtcB family. Catalytic component of the tRNA-splicing ligase complex. Mn(2+) serves as cofactor.

It carries out the reaction a 3'-end 3'-phospho-ribonucleotide-RNA + a 5'-end dephospho-ribonucleoside-RNA + GTP = a ribonucleotidyl-ribonucleotide-RNA + GMP + diphosphate. The enzyme catalyses a 3'-end 2',3'-cyclophospho-ribonucleotide-RNA + a 5'-end dephospho-ribonucleoside-RNA + GTP + H2O = a ribonucleotidyl-ribonucleotide-RNA + GMP + diphosphate + H(+). Its function is as follows. Catalytic subunit of the tRNA-splicing ligase complex that acts by directly joining spliced tRNA halves to mature-sized tRNAs by incorporating the precursor-derived splice junction phosphate into the mature tRNA as a canonical 3',5'-phosphodiester. May act as an RNA ligase with broad substrate specificity, and may function toward other RNAs. This chain is RNA-splicing ligase RtcB homolog, found in Monosiga brevicollis (Choanoflagellate).